The chain runs to 239 residues: Lactate utilization protein A (239 aa).

The protein belongs to the LutA/YkgE family.

Is involved in L-lactate degradation and allows cells to grow with lactate as the sole carbon source. In Bacillus cereus (strain G9842), this protein is Lactate utilization protein A.